Here is a 367-residue protein sequence, read N- to C-terminus: Nociceptin receptor (367 aa).

Over 1-45 (MESLFPAPFWEVLYGSHFQGNLSLLNETVPHHLLLNASHSAFLPL) the chain is Extracellular. 3 N-linked (GlcNAc...) asparagine glycosylation sites follow: Asn21, Asn26, and Asn36. Residues 46–71 (GLKVTIVGLYLAVCIGGLLGNCLVMY) traverse the membrane as a helical segment. Over 72–84 (VILRHTKMKTATN) the chain is Cytoplasmic. A helical membrane pass occupies residues 85 to 106 (IYIFNLALADTLVLLTLPFQGT). Residues 107–121 (DILLGFWPFGNALCK) are Extracellular-facing. A disulfide bridge links Cys120 with Cys197. A helical transmembrane segment spans residues 122–143 (TVIAIDYYNMFTSTFTLTAMSV). The Cytoplasmic portion of the chain corresponds to 144–162 (DRYVAICHPIRALDVRTSS). A helical transmembrane segment spans residues 163–185 (KAQAVNVAIWALASVVGVPVAIM). The Extracellular portion of the chain corresponds to 186–208 (GSAQVEDEEIECLVEIPAPQDYW). The helical transmembrane segment at 209–233 (GPVFAICIFLFSFIIPVLIISVCYS) threads the bilayer. The Cytoplasmic portion of the chain corresponds to 234–261 (LMIRRLRGVRLLSGSREKDRNLRRITRL). The chain crosses the membrane as a helical span at residues 262 to 282 (VLVVVAVFVGCWTPVQVFVLV). Topologically, residues 283 to 297 (QGLGVQPGSETAVAI) are extracellular. Residues 298–319 (LRFCTALGYVNSCLNPILYAFL) traverse the membrane as a helical segment. Residues 320-367 (DENFKACFRKFCCASALHREMQVSDRVRSIAKDVGLGCKTSETVPRPA) are Cytoplasmic-facing. Cys331 carries the S-palmitoyl cysteine lipid modification.

This sequence belongs to the G-protein coupled receptor 1 family. In terms of processing, phosphorylation at Ser-360 requires GRK3. As to expression, in the brain, isoform KOR3 and isoform KOR3C are most abundant in hypothalamus and periaqueductal gray. Isoform KOR3A is highly expressed in cortex, striatum and brainstem. Isoform KOR3D is highly expressed in cerebellum, hypothalamus and brainstem. Detected in spleen lymphocytes.

The protein resides in the cell membrane. Its subcellular location is the cytoplasmic vesicle. Its function is as follows. G-protein coupled opioid receptor that functions as a receptor for the endogenous neuropeptide nociceptin. Ligand binding causes a conformation change that triggers signaling via guanine nucleotide-binding proteins (G proteins) and modulates the activity of down-stream effectors. Signaling via G proteins mediates inhibition of adenylate cyclase activity and calcium channel activity. Arrestins modulate signaling via G proteins and mediate the activation of alternative signaling pathways that lead to the activation of MAP kinases. Plays a role in modulating nociception and the perception of pain. Plays a role in the regulation of locomotor activity by the neuropeptide nociceptin. The polypeptide is Nociceptin receptor (Oprl1) (Mus musculus (Mouse)).